We begin with the raw amino-acid sequence, 478 residues long: Probable cyclin-dependent kinase 9 (478 aa).

The span at 1–17 (MSAQNYHAGLHQSSTQR) shows a compositional bias: polar residues. Positions 1 to 55 (MSAQNYHAGLHQSSTQRPPKRPNTEHAQEPPKRALIGGQTTPSSSGGGQTPNGTN) are disordered. A compositionally biased stretch (basic and acidic residues) spans 22-32 (PNTEHAQEPPK). Residues 85–413 (YEKLNKIGQG…SDEAEDDIWF (329 aa)) form the Protein kinase domain. ATP is bound by residues 91-99 (IGQGTFGEV) and lysine 114. Aspartate 217 acts as the Proton acceptor in catalysis. The disordered stretch occupies residues 444-478 (HANRGRHQNAQQRPNQQQARPSNAIPAGQYRDTIF). Low complexity predominate over residues 451–464 (QNAQQRPNQQQARP).

It belongs to the protein kinase superfamily. CMGC Ser/Thr protein kinase family. CDC2/CDKX subfamily. Associates with cyclin-T (cit-1.1 or cit-1.2) to form P-TEFb.

It localises to the nucleus. The catalysed reaction is L-seryl-[protein] + ATP = O-phospho-L-seryl-[protein] + ADP + H(+). It catalyses the reaction L-threonyl-[protein] + ATP = O-phospho-L-threonyl-[protein] + ADP + H(+). The enzyme catalyses [DNA-directed RNA polymerase] + ATP = phospho-[DNA-directed RNA polymerase] + ADP + H(+). In terms of biological role, essential member of the cyclin-dependent kinase pair (CDK9/cyclin-T) complex, also called positive transcription elongation factor B (P-TEFb), which is proposed to facilitate the transition from abortive to production elongation by phosphorylating the CTD (C-terminal domain) of the large subunit of RNA polymerase II (RNAP II) and spt-5. This chain is Probable cyclin-dependent kinase 9 (cdk-9), found in Caenorhabditis elegans.